A 556-amino-acid polypeptide reads, in one-letter code: Large cysteine-rich periplasmic protein OmcB (556 aa).

An N-terminal signal peptide occupies residues 1–22 (MSKLIRRVVTVLALTSMASCFA). Residues 23 to 40 (SGGIEAAVAESLITKIVA) constitute a propeptide that is removed on maturation.

As to quaternary structure, part of a disulfide cross-linked outer membrane complex (COMC) composed of the major outer membrane porin (MOMP), the small cysteine-rich protein (OmcA) and the large cysteine-rich periplasmic protein (OmcB).

The protein resides in the periplasm. Functionally, in elementary bodies (EBs, the infectious stage, which is able to survive outside the host cell) provides the structural integrity of the outer envelope through disulfide cross-links with the small cysteine-rich protein and the major outer membrane porin. It has been described in publications as the Sarkosyl-insoluble COMC (Chlamydia outer membrane complex), and serves as the functional equivalent of peptidoglycan. The polypeptide is Large cysteine-rich periplasmic protein OmcB (omcB) (Chlamydia pneumoniae (Chlamydophila pneumoniae)).